A 421-amino-acid chain; its full sequence is Acyl-coenzyme A thioesterase 6 (421 aa).

Active-site charge relay system residues include serine 232, aspartate 326, and histidine 360. The short motif at 419–421 (SKI) is the Peroxisome targeting signal element.

The protein belongs to the C/M/P thioester hydrolase family.

Its subcellular location is the peroxisome. The protein localises to the cytoplasm. The catalysed reaction is pristanoyl-CoA + H2O = 2,6,10,14-tetramethylpentadecanoate + CoA + H(+). It catalyses the reaction phytanoyl-CoA + H2O = 3,7,11,15-tetramethylhexadecanoate + CoA + H(+). The protein operates within lipid metabolism; fatty acid metabolism. Its function is as follows. Catalyzes the hydrolysis of acyl-CoAs into free fatty acids and coenzyme A (CoASH), regulating their respective intracellular levels. Catalyzes the hydrolysis of phytanoyl-CoA and pristanoyl-CoA, two methyl-branched fatty acids derived from phytol, that enter the body via the diet. The protein is Acyl-coenzyme A thioesterase 6 of Homo sapiens (Human).